The primary structure comprises 101 residues: NADH-quinone oxidoreductase subunit K (101 aa).

3 consecutive transmembrane segments (helical) span residues 4 to 24 (LGHLLVLGAALFCISLAGIFL), 30 to 50 (IVLLMSIELMLLAVNVNFIAF), and 62 to 82 (FVFFILTVAAAEAAIGLAILV).

This sequence belongs to the complex I subunit 4L family. In terms of assembly, NDH-1 is composed of 14 different subunits. Subunits NuoA, H, J, K, L, M, N constitute the membrane sector of the complex.

The protein localises to the cell inner membrane. It catalyses the reaction a quinone + NADH + 5 H(+)(in) = a quinol + NAD(+) + 4 H(+)(out). Its function is as follows. NDH-1 shuttles electrons from NADH, via FMN and iron-sulfur (Fe-S) centers, to quinones in the respiratory chain. The immediate electron acceptor for the enzyme in this species is believed to be ubiquinone. Couples the redox reaction to proton translocation (for every two electrons transferred, four hydrogen ions are translocated across the cytoplasmic membrane), and thus conserves the redox energy in a proton gradient. This chain is NADH-quinone oxidoreductase subunit K, found in Xylella fastidiosa (strain 9a5c).